Here is a 455-residue protein sequence, read N- to C-terminus: Alcohol acyl transferase 1 allele GSb (455 aa).

Active-site proton acceptor residues include H164 and N385.

Belongs to the plant acyltransferase family. In terms of tissue distribution, expressed at very low levels in the skin of ripe fruit.

Involved in the biosynthesis of volatile esters which confer ripe apple fruit flavor. Alcohol acyl transferase that can use a wide range of alcohols as substrate to produce esters. The sequence is that of Alcohol acyl transferase 1 allele GSb from Malus domestica (Apple).